An 82-amino-acid polypeptide reads, in one-letter code: MRNIKMPKRLLQGVVISSKADKTVTVKVERKFKHPIYKKFVKVSKKYAAHDSENKYQEGDKVSIIESRPISKTKTWVVVNGE.

The protein belongs to the universal ribosomal protein uS17 family. Part of the 30S ribosomal subunit.

Its function is as follows. One of the primary rRNA binding proteins, it binds specifically to the 5'-end of 16S ribosomal RNA. The protein is Small ribosomal subunit protein uS17 of Rickettsia rickettsii (strain Iowa).